The sequence spans 149 residues: Cytochrome c' (149 aa).

An N-terminal signal peptide occupies residues methionine 1–alanine 19. Residues arginine 29, threonine 89, alanine 90, cysteine 138, cysteine 141, and histidine 142 each coordinate heme c.

As to quaternary structure, monomer and homodimer. Post-translationally, binds 1 heme c group covalently per subunit.

Cytochrome c' is the most widely occurring bacterial c-type cytochrome. Cytochromes c' are high-spin proteins and the heme has no sixth ligand. Their exact function is not known. The polypeptide is Cytochrome c' (cycP) (Cereibacter sphaeroides (strain ATCC 17023 / DSM 158 / JCM 6121 / CCUG 31486 / LMG 2827 / NBRC 12203 / NCIMB 8253 / ATH 2.4.1.) (Rhodobacter sphaeroides)).